The sequence spans 348 residues: Benzoate 1,2-dioxygenase electron transfer component (348 aa).

The 96-residue stretch at 14–109 (HQVALQFEDG…DAVFQIQASS (96 aa)) folds into the 2Fe-2S ferredoxin-type domain. [2Fe-2S] cluster is bound by residues Cys-51, Cys-56, Cys-59, and Cys-93. A ferredoxin-reductase region spans residues 111-348 (VCKTKIHHFE…NFLFEKFSAN (238 aa)). The FAD-binding FR-type domain occupies 116 to 217 (IHHFEGTLAR…TGPFGSFYLR (102 aa)).

This sequence belongs to the bacterial ring-hydroxylating dioxygenase ferredoxin reductase family. As to quaternary structure, this dioxygenase system consists of three proteins: the two subunits of the hydroxylase component (BenA and BenB), and an electron transfer component (BenC). FAD is required as a cofactor. It depends on [2Fe-2S] cluster as a cofactor.

The enzyme catalyses 2 reduced [2Fe-2S]-[ferredoxin] + NAD(+) + H(+) = 2 oxidized [2Fe-2S]-[ferredoxin] + NADH. The protein operates within xenobiotic degradation; toluene degradation. In terms of biological role, electron transfer component of benzoate 1,2-dioxygenase system. This chain is Benzoate 1,2-dioxygenase electron transfer component (benC), found in Acinetobacter baylyi (strain ATCC 33305 / BD413 / ADP1).